The primary structure comprises 318 residues: Olfactory receptor 52D1 (318 aa).

Residues 1 to 28 (MSDSNLSDNHLPDTFFLTGIPGLEAAHF) are Extracellular-facing. Asn-5 carries an N-linked (GlcNAc...) asparagine glycan. The chain crosses the membrane as a helical span at residues 29–49 (WIAIPFCAMYLVALVGNAALI). Residues 50-57 (LVIAMDNA) lie on the Cytoplasmic side of the membrane. The helical transmembrane segment at 58–78 (LHAPMYLFLCLLSLTDLALSS) threads the bilayer. Over 79–102 (TTVPKMLAILWLHAGEISFGGCLA) the chain is Extracellular. The cysteines at positions 100 and 192 are disulfide-linked. Residues 103-123 (QMFCVHSIYALESSILLAMAF) form a helical membrane-spanning segment. At 124–142 (DRYVAICNPLRYTTILNHA) the chain is on the cytoplasmic side. A helical transmembrane segment spans residues 143-163 (VIGRIGFVGLFRSVAIVSPFI). Over 164-199 (FLLRRLPYCGHRVMTHTYCEHMGIARLACANITVNI) the chain is Extracellular. Residues 200-220 (VYGLTVALLAMGLDSILIAIS) traverse the membrane as a helical segment. The Cytoplasmic segment spans residues 221 to 240 (YGFILHAVFHLPSHDAQHKA). The chain crosses the membrane as a helical span at residues 241 to 261 (LSTCGSHIGIILVFYIPAFFS). Topologically, residues 262 to 277 (FLTHRFGHHEVPKHVH) are extracellular. Residues 278–298 (IFLANLYVLVPPVLNPILYGA) form a helical membrane-spanning segment. The Cytoplasmic segment spans residues 299 to 318 (RTKEIRSRLLKLLHLGKTSI).

It belongs to the G-protein coupled receptor 1 family.

It is found in the cell membrane. In terms of biological role, odorant receptor. This is Olfactory receptor 52D1 (OR52D1) from Homo sapiens (Human).